The chain runs to 955 residues: Protein translocase subunit SecA (955 aa).

ATP is bound by residues Gln-87, Gly-105–Thr-109, and Asp-494. The tract at residues Ala-861–Arg-955 is disordered. A compositionally biased stretch (low complexity) spans Gln-874 to Ala-888. The segment covering Ser-943 to Arg-955 has biased composition (basic residues).

This sequence belongs to the SecA family. In terms of assembly, monomer and homodimer. Part of the essential Sec protein translocation apparatus which comprises SecA, SecYEG and auxiliary proteins SecDF. Other proteins may also be involved.

It is found in the cell membrane. The protein resides in the cytoplasm. The enzyme catalyses ATP + H2O + cellular proteinSide 1 = ADP + phosphate + cellular proteinSide 2.. Functionally, part of the Sec protein translocase complex. Interacts with the SecYEG preprotein conducting channel. Has a central role in coupling the hydrolysis of ATP to the transfer of proteins into and across the cell membrane, serving as an ATP-driven molecular motor driving the stepwise translocation of polypeptide chains across the membrane. The polypeptide is Protein translocase subunit SecA (Rhodococcus jostii (strain RHA1)).